The primary structure comprises 148 residues: MKIINILFCLFLLLLNSCNSNDNDTLKNNAQQTKSRGKRDLTQKEATPEKPKSKEELLREKLSEDQKTHLDWLKEALGNDGEFDKFLGYDESKIKTALDHIKSELDKCNGNDADQQKTTFKQTVQGALSGGIDGFGSNNAVTTCGNGS.

The signal sequence occupies residues 1–17 (MKIINILFCLFLLLLNS). C18 carries the N-palmitoyl cysteine lipid modification. C18 is lipidated: S-diacylglycerol cysteine. Residues 26-58 (LKNNAQQTKSRGKRDLTQKEATPEKPKSKEELL) form a disordered region. Residues 38-58 (KRDLTQKEATPEKPKSKEELL) are compositionally biased toward basic and acidic residues.

It belongs to the Multicopy lipoprotein (Mlp) family.

Its subcellular location is the cell outer membrane. Its function is as follows. An outer membrane protein that may participate in pathogenesis. Some human Lyme disease patients have antibodies against this protein. The Mlp proteins probably undergo intragenic recombination, generating new alleles. The sequence is that of Lipoprotein MlpA (mlpA) from Borreliella burgdorferi (strain ATCC 35210 / DSM 4680 / CIP 102532 / B31) (Borrelia burgdorferi).